Consider the following 334-residue polypeptide: Trans-1,2-dihydrobenzene-1,2-diol dehydrogenase (334 aa).

Belongs to the Gfo/Idh/MocA family. As to quaternary structure, homodimer. In terms of tissue distribution, small intestine.

It carries out the reaction (1R,2R)-1,2-dihydrobenzene-1,2-diol + NADP(+) = catechol + NADPH + H(+). It catalyses the reaction D-xylose + NADP(+) = D-xylono-1,5-lactone + NADPH + H(+). The chain is Trans-1,2-dihydrobenzene-1,2-diol dehydrogenase (DHDH) from Homo sapiens (Human).